The primary structure comprises 183 residues: MTSQIRQNYSTEVEAAVNRLVNLHLRASYTYLSLGFFFDRDDVALEGVGHFFRELAEEKREGAERLLKLQNERGGRALFQDVQKPSQDEWGKTLEAMEAALALEKNLNQALLDLHALGSARTDPHLCDFLESHFLDKEVKLIKKMGNHLTNLRRVAGPQPAQTGVAQASLGEYLFERLTLKHD.

The Ferritin-like diiron domain occupies 7 to 156; that stretch reads QNYSTEVEAA…NHLTNLRRVA (150 aa). Fe cation-binding residues include glutamate 54, glutamate 57, glutamate 58, glutamate 61, and glutamate 64.

It belongs to the ferritin family. As to quaternary structure, oligomer of 24 subunits. There are two types of subunits: L (light) chain and H (heavy) chain. The major chain can be light or heavy, depending on the species and tissue type. The functional molecule forms a roughly spherical shell with a diameter of 12 nm and contains a central cavity into which the insoluble mineral iron core is deposited. Interacts with NCOA4. As to expression, in rat liver, the light chain is the major chain.

Its subcellular location is the cytoplasmic vesicle. It localises to the autophagosome. The protein resides in the cytoplasm. The protein localises to the autolysosome. Functionally, stores iron in a soluble, non-toxic, readily available form. Important for iron homeostasis. Iron is taken up in the ferrous form and deposited as ferric hydroxides after oxidation. Also plays a role in delivery of iron to cells. Mediates iron uptake in capsule cells of the developing kidney. Delivery to lysosomes by the cargo receptor NCOA4 for autophagic degradation and release or iron. The chain is Ferritin light chain 1 (Ftl1) from Rattus norvegicus (Rat).